Consider the following 1303-residue polypeptide: DNA-directed RNA polymerase subunit beta' (1303 aa).

C60, C62, C75, and C78 together coordinate Zn(2+). Residues D535, D537, and D539 each coordinate Mg(2+). Residues C876, C953, C960, and C963 each coordinate Zn(2+).

This sequence belongs to the RNA polymerase beta' chain family. In terms of assembly, the RNAP catalytic core consists of 2 alpha, 1 beta, 1 beta' and 1 omega subunit. When a sigma factor is associated with the core the holoenzyme is formed, which can initiate transcription. Mg(2+) serves as cofactor. It depends on Zn(2+) as a cofactor.

It carries out the reaction RNA(n) + a ribonucleoside 5'-triphosphate = RNA(n+1) + diphosphate. DNA-dependent RNA polymerase catalyzes the transcription of DNA into RNA using the four ribonucleoside triphosphates as substrates. This is DNA-directed RNA polymerase subunit beta' from Saccharopolyspora erythraea (strain ATCC 11635 / DSM 40517 / JCM 4748 / NBRC 13426 / NCIMB 8594 / NRRL 2338).